Consider the following 168-residue polypeptide: MFKKLLLSVGLVWCLISLGQARKESTVEECEKNIGDSLKDRVCELRQYTPVSSDDMDKHMQCVLEVVGFVDGNGEVKESVLLELLQRVDSGVNHAANMKKCVTEASTSGSDKKANTFYTCFLGTSSLAGFKNAVDYNELLKAGKMQTSDPFDMNRVAALIKEIDDGLC.

Residues 1 to 21 form the signal peptide; that stretch reads MFKKLLLSVGLVWCLISLGQA. Intrachain disulfides connect cysteine 30–cysteine 62, cysteine 43–cysteine 168, and cysteine 101–cysteine 120. Residues glutamate 31 and arginine 46 each coordinate noradrenaline. Glutamate 31 contacts serotonin. Serotonin contacts are provided by histidine 59, tyrosine 118, aspartate 135, and glutamate 138. Histamine is bound by residues tyrosine 118, aspartate 135, and glutamate 138. Residues aspartate 135 and glutamate 138 each coordinate noradrenaline.

It belongs to the PBP/GOBP family. As to expression, female saliva (at protein level). Female salivary gland. Not detected in female carcass without salivary glands. Not detected in male tissues.

The protein localises to the secreted. In terms of biological role, modulates blood feeding of female mosquitoes on vertebrate species by binding and sequestering different mediators involved in the host response. Binds serotonin, noradrenaline, histamine and adrenaline. Inhibits histamine-, serotonin- and noradrenaline-induced smooth muscle contraction. Exhibits vasodilating activity. The polypeptide is Short form salivary protein D7R2 (Anopheles gambiae (African malaria mosquito)).